The chain runs to 294 residues: 4-hydroxy-tetrahydrodipicolinate synthase (294 aa).

Residue threonine 45 coordinates pyruvate. Residue tyrosine 133 is the Proton donor/acceptor of the active site. Lysine 162 (schiff-base intermediate with substrate) is an active-site residue. Valine 204 is a binding site for pyruvate.

The protein belongs to the DapA family. In terms of assembly, homotetramer; dimer of dimers.

The protein resides in the cytoplasm. It carries out the reaction L-aspartate 4-semialdehyde + pyruvate = (2S,4S)-4-hydroxy-2,3,4,5-tetrahydrodipicolinate + H2O + H(+). The protein operates within amino-acid biosynthesis; L-lysine biosynthesis via DAP pathway; (S)-tetrahydrodipicolinate from L-aspartate: step 3/4. Its function is as follows. Catalyzes the condensation of (S)-aspartate-beta-semialdehyde [(S)-ASA] and pyruvate to 4-hydroxy-tetrahydrodipicolinate (HTPA). The sequence is that of 4-hydroxy-tetrahydrodipicolinate synthase from Bartonella bacilliformis (strain ATCC 35685 / KC583 / Herrer 020/F12,63).